Consider the following 185-residue polypeptide: Transcription termination/antitermination protein NusG (185 aa).

In terms of domain architecture, KOW spans 134-162 (PGQMVRVIDGPFNDFDGLVEEVNYEKNRL).

Belongs to the NusG family.

Participates in transcription elongation, termination and antitermination. This chain is Transcription termination/antitermination protein NusG, found in Xylella fastidiosa (strain 9a5c).